Here is a 785-residue protein sequence, read N- to C-terminus: Putative lipase C4A8.10 (785 aa).

2 disordered regions span residues 29-99 and 115-140; these read HSAT…SSDF and NTNA…VGTS. A compositionally biased stretch (low complexity) spans 32–41; that stretch reads TSSTTVPPTV. The span at 47–58 shows a compositional bias: basic and acidic residues; the sequence is TKKESGSIEDRA. Residues 63–86 show a composition bias toward polar residues; that stretch reads MTISSGENISKQISENNSSTNPKH. 2 stretches are compositionally biased toward low complexity: residues 89–99 and 127–140; these read SESSPLLSSDF and GVSH…VGTS. S390 acts as the Charge relay system in catalysis.

This sequence belongs to the putative lipase ROG1 family.

This chain is Putative lipase C4A8.10, found in Schizosaccharomyces pombe (strain 972 / ATCC 24843) (Fission yeast).